The following is a 428-amino-acid chain: Adenylosuccinate synthetase (428 aa).

GTP contacts are provided by residues 11-17 (GDEGKGK) and 39-41 (GHT). Asp-12 acts as the Proton acceptor in catalysis. Mg(2+) contacts are provided by Asp-12 and Gly-39. IMP is bound by residues 12–15 (DEGK), 37–40 (NAGH), Thr-130, Arg-144, Asn-226, Thr-241, and Arg-305. The active-site Proton donor is the His-40. 301–307 (VTTGRKR) serves as a coordination point for substrate. GTP-binding positions include Arg-307, 333–335 (KLD), and 415–417 (GTG).

The protein belongs to the adenylosuccinate synthetase family. As to quaternary structure, homodimer. It depends on Mg(2+) as a cofactor.

The protein resides in the cytoplasm. It catalyses the reaction IMP + L-aspartate + GTP = N(6)-(1,2-dicarboxyethyl)-AMP + GDP + phosphate + 2 H(+). The protein operates within purine metabolism; AMP biosynthesis via de novo pathway; AMP from IMP: step 1/2. In terms of biological role, plays an important role in the de novo pathway and in the salvage pathway of purine nucleotide biosynthesis. Catalyzes the first committed step in the biosynthesis of AMP from IMP. The sequence is that of Adenylosuccinate synthetase from Candida albicans (strain SC5314 / ATCC MYA-2876) (Yeast).